The sequence spans 48 residues: Large ribosomal subunit protein eL40 (48 aa).

Belongs to the eukaryotic ribosomal protein eL40 family.

The polypeptide is Large ribosomal subunit protein eL40 (Methanocella arvoryzae (strain DSM 22066 / NBRC 105507 / MRE50)).